We begin with the raw amino-acid sequence, 72 residues long: Small ribosomal subunit protein bS18c (72 aa).

This sequence belongs to the bacterial ribosomal protein bS18 family. As to quaternary structure, part of the 30S ribosomal subunit.

It localises to the plastid. Its subcellular location is the chloroplast. This Thalassiosira pseudonana (Marine diatom) protein is Small ribosomal subunit protein bS18c.